Consider the following 102-residue polypeptide: Trp operon repressor homolog (102 aa).

A DNA-binding region spans residues 59 to 82 (QRQISQMLGVGIATITRGSNELKL).

This sequence belongs to the TrpR family. In terms of assembly, homodimer.

It localises to the cytoplasm. In terms of biological role, this protein is an aporepressor. When complexed with L-tryptophan it binds the operator region of the trp operon and prevents the initiation of transcription. The sequence is that of Trp operon repressor homolog from Vibrio vulnificus (strain CMCP6).